The following is a 125-amino-acid chain: Large ribosomal subunit protein bL20 (125 aa).

It belongs to the bacterial ribosomal protein bL20 family.

In terms of biological role, binds directly to 23S ribosomal RNA and is necessary for the in vitro assembly process of the 50S ribosomal subunit. It is not involved in the protein synthesizing functions of that subunit. This chain is Large ribosomal subunit protein bL20, found in Methylobacterium sp. (strain 4-46).